Reading from the N-terminus, the 201-residue chain is Ribonuclease HII (201 aa).

Residues leucine 10–serine 200 form the RNase H type-2 domain. Residues aspartate 16, glutamate 17, and aspartate 108 each coordinate a divalent metal cation.

It belongs to the RNase HII family. Requires Mn(2+) as cofactor. Mg(2+) is required as a cofactor.

It localises to the cytoplasm. The catalysed reaction is Endonucleolytic cleavage to 5'-phosphomonoester.. Functionally, endonuclease that specifically degrades the RNA of RNA-DNA hybrids. This Bacteroides fragilis (strain YCH46) protein is Ribonuclease HII.